The sequence spans 374 residues: Proteinase-activated receptor 3 (374 aa).

The N-terminal stretch at 1–21 (MKALIFAAAGLLLLLPTFCQS) is a signal peptide. Positions 22–38 (GMENDTNNLAKPTLPIK) are cleaved as a propeptide — removed for receptor activation. N-linked (GlcNAc...) asparagine glycosylation is found at N25 and N82. Over 39–94 (TFRGAPPNSFEEFPFSALEGWTGATITVKIKCPEESASHLHVKNATMGYLTSSLST) the chain is Extracellular. Residues 95-120 (KLIPAIYLLVFVVGVPANAVTLWMLF) traverse the membrane as a helical segment. Over 121 to 128 (FRTRSICT) the chain is Cytoplasmic. Residues 129–148 (TVFYTNLAIADFLFCVTLPF) traverse the membrane as a helical segment. Residues 149-167 (KIAYHLNGNNWVFGEVLCR) lie on the Extracellular side of the membrane. C166 and C245 are joined by a disulfide. A helical transmembrane segment spans residues 168-189 (ATTVIFYGNMYCSILLLACISI). Residues 190 to 206 (NRYLAIVHPFTYRGLPK) lie on the Cytoplasmic side of the membrane. A helical membrane pass occupies residues 207–230 (HTYALVTCGLVWATVFLYMLPFFI). Residues 231–260 (LKQEYYLVQPDITTCHDVHNTCESSSPFQL) lie on the Extracellular side of the membrane. Residues 261-280 (YYFISLAFFGFLIPFVLIIY) form a helical membrane-spanning segment. At 281–297 (CYAAIIRTLNAYDHRWL) the chain is on the cytoplasmic side. Residues 298-322 (WYVKASLLILVIFTICFAPSNIILI) form a helical membrane-spanning segment. The Extracellular segment spans residues 323 to 336 (IHHANYYYNNTDGL). N331 is a glycosylation site (N-linked (GlcNAc...) asparagine). The chain crosses the membrane as a helical span at residues 337-361 (YFIYLIALCLGSLNSCLDPFLYFLM). Residues 362-374 (SKTRNHSTAYLTK) are Cytoplasmic-facing.

The protein belongs to the G-protein coupled receptor 1 family. Interacts with INSC/inscuteable and probably GPSM2. A proteolytic cleavage generates a new N-terminus that functions as a tethered ligand. As to expression, highest expression in the megakaryocytes of the bone marrow, lower in mature megakaryocytes, in platelets and in a variety of other tissues such as heart and gut.

It is found in the cell membrane. In terms of biological role, receptor for activated thrombin coupled to G proteins that stimulate phosphoinositide hydrolysis. This chain is Proteinase-activated receptor 3 (F2RL2), found in Homo sapiens (Human).